The primary structure comprises 202 residues: Na(+)-translocating NADH-quinone reductase subunit E (202 aa).

6 consecutive transmembrane segments (helical) span residues 11 to 31 (AVFI…FLAV), 39 to 59 (FGLG…NNLI), 81 to 101 (FLKF…LEMA), 114 to 134 (GIFL…AFMV), 144 to 164 (VVFG…LAAV), and 180 to 200 (LGIT…FSGV).

This sequence belongs to the NqrDE/RnfAE family. In terms of assembly, composed of six subunits; NqrA, NqrB, NqrC, NqrD, NqrE and NqrF.

The protein localises to the cell inner membrane. It catalyses the reaction a ubiquinone + n Na(+)(in) + NADH + H(+) = a ubiquinol + n Na(+)(out) + NAD(+). Its function is as follows. NQR complex catalyzes the reduction of ubiquinone-1 to ubiquinol by two successive reactions, coupled with the transport of Na(+) ions from the cytoplasm to the periplasm. NqrA to NqrE are probably involved in the second step, the conversion of ubisemiquinone to ubiquinol. The sequence is that of Na(+)-translocating NADH-quinone reductase subunit E from Idiomarina loihiensis (strain ATCC BAA-735 / DSM 15497 / L2-TR).